A 77-amino-acid chain; its full sequence is Translation initiation factor IF-1, chloroplastic (77 aa).

One can recognise an S1-like domain in the interval 1-71 (MKEQKWIHEG…TRGRIIYRLR (71 aa)).

The protein belongs to the IF-1 family. In terms of assembly, component of the 30S ribosomal translation pre-initiation complex which assembles on the 30S ribosome in the order IF-2 and IF-3, IF-1 and N-formylmethionyl-tRNA(fMet); mRNA recruitment can occur at any time during PIC assembly.

The protein resides in the plastid. It is found in the chloroplast. One of the essential components for the initiation of protein synthesis. Stabilizes the binding of IF-2 and IF-3 on the 30S subunit to which N-formylmethionyl-tRNA(fMet) subsequently binds. Helps modulate mRNA selection, yielding the 30S pre-initiation complex (PIC). Upon addition of the 50S ribosomal subunit IF-1, IF-2 and IF-3 are released leaving the mature 70S translation initiation complex. In Daucus carota (Wild carrot), this protein is Translation initiation factor IF-1, chloroplastic.